Here is a 317-residue protein sequence, read N- to C-terminus: Acetyl-coenzyme A carboxylase carboxyl transferase subunit alpha (317 aa).

Positions 39–293 (RLQKKSNDLT…KAVLEKQLHE (255 aa)) constitute a CoA carboxyltransferase C-terminal domain.

Belongs to the AccA family. In terms of assembly, acetyl-CoA carboxylase is a heterohexamer composed of biotin carboxyl carrier protein (AccB), biotin carboxylase (AccC) and two subunits each of ACCase subunit alpha (AccA) and ACCase subunit beta (AccD).

The protein resides in the cytoplasm. It catalyses the reaction N(6)-carboxybiotinyl-L-lysyl-[protein] + acetyl-CoA = N(6)-biotinyl-L-lysyl-[protein] + malonyl-CoA. It functions in the pathway lipid metabolism; malonyl-CoA biosynthesis; malonyl-CoA from acetyl-CoA: step 1/1. Component of the acetyl coenzyme A carboxylase (ACC) complex. First, biotin carboxylase catalyzes the carboxylation of biotin on its carrier protein (BCCP) and then the CO(2) group is transferred by the carboxyltransferase to acetyl-CoA to form malonyl-CoA. The polypeptide is Acetyl-coenzyme A carboxylase carboxyl transferase subunit alpha (Neisseria gonorrhoeae (strain NCCP11945)).